The following is a 334-amino-acid chain: Replication factor C small subunit (334 aa).

49 to 56 (GPPGVGKT) lines the ATP pocket.

The protein belongs to the activator 1 small subunits family. RfcS subfamily. Heteromultimer composed of small subunits (RfcS) and large subunits (RfcL).

Functionally, part of the RFC clamp loader complex which loads the PCNA sliding clamp onto DNA. The polypeptide is Replication factor C small subunit (Methanosarcina barkeri (strain Fusaro / DSM 804)).